The following is a 393-amino-acid chain: Formate-dependent phosphoribosylglycinamide formyltransferase (393 aa).

N(1)-(5-phospho-beta-D-ribosyl)glycinamide-binding positions include 22–23 and E82; that span reads EL. ATP-binding positions include R114, K155, 160 to 165, 195 to 198, and E203; these read SSGKGQ and EGFV. Positions 119-308 constitute an ATP-grasp domain; it reads RLAAEDLGIP…EFALHLRAIL (190 aa). Residues E267 and E279 each coordinate Mg(2+). Residues D286, K356, and 363 to 364 each bind N(1)-(5-phospho-beta-D-ribosyl)glycinamide; that span reads RR.

It belongs to the PurK/PurT family. In terms of assembly, homodimer.

The catalysed reaction is N(1)-(5-phospho-beta-D-ribosyl)glycinamide + formate + ATP = N(2)-formyl-N(1)-(5-phospho-beta-D-ribosyl)glycinamide + ADP + phosphate + H(+). It functions in the pathway purine metabolism; IMP biosynthesis via de novo pathway; N(2)-formyl-N(1)-(5-phospho-D-ribosyl)glycinamide from N(1)-(5-phospho-D-ribosyl)glycinamide (formate route): step 1/1. Its function is as follows. Involved in the de novo purine biosynthesis. Catalyzes the transfer of formate to 5-phospho-ribosyl-glycinamide (GAR), producing 5-phospho-ribosyl-N-formylglycinamide (FGAR). Formate is provided by PurU via hydrolysis of 10-formyl-tetrahydrofolate. The sequence is that of Formate-dependent phosphoribosylglycinamide formyltransferase from Hydrogenovibrio crunogenus (strain DSM 25203 / XCL-2) (Thiomicrospira crunogena).